A 271-amino-acid polypeptide reads, in one-letter code: Protein PXR1 (271 aa).

Disordered regions lie at residues 1 to 26 (MGLA…NNTS) and 149 to 233 (KKRP…DSAA). Residues 17-26 (RNTTWSNNTS) are compositionally biased toward polar residues. Positions 25–71 (TSRFGHKHLEKLGWKPGSGLGLVPDSTTSHIKVSIKDDNLGLGAKLK) constitute a G-patch domain. A compositionally biased stretch (basic residues) spans 165 to 205 (KKTKKVKKEKKVKKVKKEKKEKKEKKDKKEKKVKKEKKEKK). The segment covering 206–230 (EKKLKDKHSKDTNEITRDQMLKPRD) has biased composition (basic and acidic residues).

Belongs to the PINX1 family.

It is found in the nucleus. Its subcellular location is the nucleolus. In terms of biological role, involved in rRNA-processing at A0, A1 and A2 sites and negatively regulates telomerase. The chain is Protein PXR1 (PXR1) from Kluyveromyces lactis (strain ATCC 8585 / CBS 2359 / DSM 70799 / NBRC 1267 / NRRL Y-1140 / WM37) (Yeast).